Reading from the N-terminus, the 616-residue chain is Dihydroxy-acid dehydratase (616 aa).

Asp-81 is a binding site for Mg(2+). Cys-122 lines the [2Fe-2S] cluster pocket. Residues Asp-123 and Lys-124 each coordinate Mg(2+). The residue at position 124 (Lys-124) is an N6-carboxylysine. Cys-195 is a binding site for [2Fe-2S] cluster. A Mg(2+)-binding site is contributed by Glu-491. Ser-517 serves as the catalytic Proton acceptor.

This sequence belongs to the IlvD/Edd family. In terms of assembly, homodimer. The cofactor is [2Fe-2S] cluster. Mg(2+) is required as a cofactor.

It carries out the reaction (2R)-2,3-dihydroxy-3-methylbutanoate = 3-methyl-2-oxobutanoate + H2O. The enzyme catalyses (2R,3R)-2,3-dihydroxy-3-methylpentanoate = (S)-3-methyl-2-oxopentanoate + H2O. It participates in amino-acid biosynthesis; L-isoleucine biosynthesis; L-isoleucine from 2-oxobutanoate: step 3/4. It functions in the pathway amino-acid biosynthesis; L-valine biosynthesis; L-valine from pyruvate: step 3/4. Functions in the biosynthesis of branched-chain amino acids. Catalyzes the dehydration of (2R,3R)-2,3-dihydroxy-3-methylpentanoate (2,3-dihydroxy-3-methylvalerate) into 2-oxo-3-methylpentanoate (2-oxo-3-methylvalerate) and of (2R)-2,3-dihydroxy-3-methylbutanoate (2,3-dihydroxyisovalerate) into 2-oxo-3-methylbutanoate (2-oxoisovalerate), the penultimate precursor to L-isoleucine and L-valine, respectively. The protein is Dihydroxy-acid dehydratase of Methylocella silvestris (strain DSM 15510 / CIP 108128 / LMG 27833 / NCIMB 13906 / BL2).